The primary structure comprises 345 residues: Selenide, water dikinase (345 aa).

Cys15 is a catalytic residue. ATP-binding positions include Lys18 and 46–48 (SKD). Asp49 contributes to the Mg(2+) binding site. Residues Asp66, Asp89, and 137-139 (GHS) each bind ATP. Residue Asp89 participates in Mg(2+) binding. Asp225 provides a ligand contact to Mg(2+).

It belongs to the selenophosphate synthase 1 family. Class I subfamily. In terms of assembly, homodimer. The cofactor is Mg(2+).

It carries out the reaction hydrogenselenide + ATP + H2O = selenophosphate + AMP + phosphate + 2 H(+). Synthesizes selenophosphate from selenide and ATP. The sequence is that of Selenide, water dikinase from Aeromonas salmonicida (strain A449).